Reading from the N-terminus, the 213-residue chain is Pyrrolidone-carboxylate peptidase (213 aa).

Active-site residues include Glu-78, Cys-141, and His-165.

Belongs to the peptidase C15 family. Homotetramer.

It is found in the cytoplasm. It carries out the reaction Release of an N-terminal pyroglutamyl group from a polypeptide, the second amino acid generally not being Pro.. In terms of biological role, removes 5-oxoproline from various penultimate amino acid residues except L-proline. This chain is Pyrrolidone-carboxylate peptidase, found in Clostridium perfringens (strain ATCC 13124 / DSM 756 / JCM 1290 / NCIMB 6125 / NCTC 8237 / Type A).